The chain runs to 292 residues: MEQYEKVEKIGEGTYGVVYKGKHRHTNETIALKKIRLEQEDEGVPSTAIREISLLKEMQHRNIVRLQDVVHKEKCIYLVFEYLDLDLKKHMDSSPDFKNHRIVKSFLYQILRGIAYCHSHRVLHRDLKPQNLLIDRRTNSLKLADFGLARAFGIPVRTFTHEVVTLWYRAPEILLGARHYSTPVDMWSVGCIFAEMVNQKPLFPGDSEIDELFKIFSIMGTPNEETWPGVASLPDYISTFPKWPSVDLATVVPTLDSSGLDLLSKMLRLDPSKRINARAALEHEYFKDLEVA.

The region spanning 4 to 286 (YEKVEKIGEG…ARAALEHEYF (283 aa)) is the Protein kinase domain. Residues 10-18 (IGEGTYGVV) and Lys-33 contribute to the ATP site. The residue at position 14 (Thr-14) is a Phosphothreonine. Tyr-15 is subject to Phosphotyrosine. Asp-126 acts as the Proton acceptor in catalysis. Residue Thr-160 is modified to Phosphothreonine.

The protein belongs to the protein kinase superfamily. CMGC Ser/Thr protein kinase family. CDC2/CDKX subfamily. As to expression, expressed in the dividing region of the root apex and in differentiated cells such as those in the sclerenchyma, pericycle and parenchyma of the central cylinder. Expressed in the intercalary meristem and the elongation zone of internodes.

The enzyme catalyses L-seryl-[protein] + ATP = O-phospho-L-seryl-[protein] + ADP + H(+). It carries out the reaction L-threonyl-[protein] + ATP = O-phospho-L-threonyl-[protein] + ADP + H(+). It catalyses the reaction [DNA-directed RNA polymerase] + ATP = phospho-[DNA-directed RNA polymerase] + ADP + H(+). The polypeptide is Cyclin-dependent kinase A-2 (CDKA-2) (Oryza sativa subsp. japonica (Rice)).